The sequence spans 237 residues: Leucyl/phenylalanyl-tRNA--protein transferase (237 aa).

This sequence belongs to the L/F-transferase family.

Its subcellular location is the cytoplasm. It catalyses the reaction N-terminal L-lysyl-[protein] + L-leucyl-tRNA(Leu) = N-terminal L-leucyl-L-lysyl-[protein] + tRNA(Leu) + H(+). The catalysed reaction is N-terminal L-arginyl-[protein] + L-leucyl-tRNA(Leu) = N-terminal L-leucyl-L-arginyl-[protein] + tRNA(Leu) + H(+). It carries out the reaction L-phenylalanyl-tRNA(Phe) + an N-terminal L-alpha-aminoacyl-[protein] = an N-terminal L-phenylalanyl-L-alpha-aminoacyl-[protein] + tRNA(Phe). In terms of biological role, functions in the N-end rule pathway of protein degradation where it conjugates Leu, Phe and, less efficiently, Met from aminoacyl-tRNAs to the N-termini of proteins containing an N-terminal arginine or lysine. The chain is Leucyl/phenylalanyl-tRNA--protein transferase from Photobacterium profundum (strain SS9).